The primary structure comprises 46 residues: Cuticle protein 4.9 (46 aa).

Component of the cuticle of migratory locust which contains more than 100 different structural proteins. This chain is Cuticle protein 4.9, found in Locusta migratoria (Migratory locust).